The following is a 228-amino-acid chain: Large ribosomal subunit protein uL1 (228 aa).

The protein belongs to the universal ribosomal protein uL1 family. In terms of assembly, part of the 50S ribosomal subunit.

Its function is as follows. Binds directly to 23S rRNA. The L1 stalk is quite mobile in the ribosome, and is involved in E site tRNA release. Protein L1 is also a translational repressor protein, it controls the translation of the L11 operon by binding to its mRNA. The chain is Large ribosomal subunit protein uL1 from Clavibacter sepedonicus (Clavibacter michiganensis subsp. sepedonicus).